A 354-amino-acid polypeptide reads, in one-letter code: Uroporphyrinogen decarboxylase (354 aa).

Residues 27–31 (RQAGR), Asp77, Tyr154, Thr209, and His327 each bind substrate.

The protein belongs to the uroporphyrinogen decarboxylase family. Homodimer.

It is found in the cytoplasm. The enzyme catalyses uroporphyrinogen III + 4 H(+) = coproporphyrinogen III + 4 CO2. It functions in the pathway porphyrin-containing compound metabolism; protoporphyrin-IX biosynthesis; coproporphyrinogen-III from 5-aminolevulinate: step 4/4. Functionally, catalyzes the decarboxylation of four acetate groups of uroporphyrinogen-III to yield coproporphyrinogen-III. This chain is Uroporphyrinogen decarboxylase, found in Escherichia coli O17:K52:H18 (strain UMN026 / ExPEC).